The following is a 160-amino-acid chain: Nucleotide-binding protein ASA_3207 (160 aa).

It belongs to the YajQ family.

Functionally, nucleotide-binding protein. In Aeromonas salmonicida (strain A449), this protein is Nucleotide-binding protein ASA_3207.